The primary structure comprises 285 residues: Nucleotide-binding protein Pnap_0906 (285 aa).

8 to 15 (GMSGSGKS) provides a ligand contact to ATP. 57-60 (DVRS) lines the GTP pocket.

Belongs to the RapZ-like family.

Functionally, displays ATPase and GTPase activities. The sequence is that of Nucleotide-binding protein Pnap_0906 from Polaromonas naphthalenivorans (strain CJ2).